We begin with the raw amino-acid sequence, 553 residues long: Flotillin family inner membrane protein YqiK (553 aa).

The Periplasmic portion of the chain corresponds to Met-1 to Pro-9. A helical membrane pass occupies residues Ser-10–Ala-30. The Cytoplasmic portion of the chain corresponds to Arg-31–Glu-553.

It belongs to the band 7/mec-2 family. Flotillin subfamily. In terms of assembly, homooligomerizes.

Its subcellular location is the cell inner membrane. The protein resides in the membrane raft. Found in membrane microdomains that may be equivalent to eukaryotic membrane rafts. FMMs are highly dynamic and increase in number as cells age. Flotillins are thought to be important factors in membrane fluidity. The polypeptide is Flotillin family inner membrane protein YqiK (yqiK) (Escherichia coli (strain K12)).